The following is an 85-amino-acid chain: Neurotoxin 60.35 (85 aa).

The N-terminal stretch at 1-23 (MKFCVAVSLLIIASMAGVISVSG) is a signal peptide. An LCN-type CS-alpha/beta domain is found at 24–85 (YDVYPRDYAG…NFLSVIWKQC (62 aa)). Intrachain disulfides connect Cys-38–Cys-60, Cys-46–Cys-65, and Cys-50–Cys-67.

The protein belongs to the long (3 C-C) scorpion toxin superfamily. Expressed by the venom gland.

Its subcellular location is the secreted. The sequence is that of Neurotoxin 60.35 from Lychas mucronatus (Chinese swimming scorpion).